We begin with the raw amino-acid sequence, 296 residues long: Nucleotide-binding protein str0831 (296 aa).

An ATP-binding site is contributed by 13–20 (GMSGAGKT). 63 to 66 (DMRS) provides a ligand contact to GTP.

This sequence belongs to the RapZ-like family.

Functionally, displays ATPase and GTPase activities. This chain is Nucleotide-binding protein str0831, found in Streptococcus thermophilus (strain CNRZ 1066).